The primary structure comprises 874 residues: Coatomer subunit gamma-1 (874 aa).

The span at 1–11 shows a compositional bias: basic and acidic residues; sequence MLKKFDKKDEE. Positions 1–21 are disordered; the sequence is MLKKFDKKDEESGGGSNPFQH. HEAT repeat units follow at residues 64-101, 283-320, 322-355, and 356-392; these read TEAT…IAED, KELA…KHPS, VTAC…GSES, and SIDR…KYPR. T594 bears the Phosphothreonine mark. An interaction with ZNF289/ARFGAP2 region spans residues 609–874; sequence RQEIFQEQLA…PVDIILASVG (266 aa).

This sequence belongs to the COPG family. Oligomeric complex that consists of at least the alpha, beta, beta', gamma, delta, epsilon and zeta subunits. Interacts with ZNF289/ARFGAP2 through its C-terminal appendage domain. Interacts with EGFR upon EGF treatment; interaction is essential for regulation of EGF-dependent nuclear transport of EGFR by retrograde trafficking from the Golgi to the ER. The coatomer interacts with KDEL receptors; the interaction is important for retrograde trafficking of KDEL-bearing proteins from the Golgi to the endoplasmic reticulum. Interacts with COPB1. Interacts with TMED10 (via C-terminus). Interacts with TMED2, TMED3, TMED7 and TMED9.

The protein resides in the cytoplasm. Its subcellular location is the golgi apparatus membrane. It localises to the cytoplasmic vesicle. It is found in the COPI-coated vesicle membrane. Its function is as follows. The coatomer is a cytosolic protein complex that binds to dilysine motifs and reversibly associates with Golgi non-clathrin-coated vesicles, which further mediate biosynthetic protein transport from the ER, via the Golgi up to the trans Golgi network. Coatomer complex is required for budding from Golgi membranes, and is essential for the retrograde Golgi-to-ER transport of dilysine-tagged proteins. In mammals, the coatomer can only be recruited by membranes associated to ADP-ribosylation factors (ARFs), which are small GTP-binding proteins; the complex also influences the Golgi structural integrity, as well as the processing, activity, and endocytic recycling of LDL receptors. Required for limiting lipid storage in lipid droplets. Involved in lipid homeostasis by regulating the presence of perilipin family members PLIN2 and PLIN3 at the lipid droplet surface and promoting the association of adipocyte triglyceride lipase (PNPLA2) with the lipid droplet surface to mediate lipolysis. This Homo sapiens (Human) protein is Coatomer subunit gamma-1 (COPG1).